We begin with the raw amino-acid sequence, 62 residues long: Photosystem II reaction center protein K (62 aa).

The propeptide occupies 1–25 (MPNILSLTCICFNSVLYPTTSFFFA). A helical membrane pass occupies residues 33-53 (IFNPIVDVMPVIPLFFFLLAF).

This sequence belongs to the PsbK family. PSII is composed of 1 copy each of membrane proteins PsbA, PsbB, PsbC, PsbD, PsbE, PsbF, PsbH, PsbI, PsbJ, PsbK, PsbL, PsbM, PsbT, PsbX, PsbY, PsbZ, Psb30/Ycf12, at least 3 peripheral proteins of the oxygen-evolving complex and a large number of cofactors. It forms dimeric complexes.

Its subcellular location is the plastid. It is found in the chloroplast thylakoid membrane. Functionally, one of the components of the core complex of photosystem II (PSII). PSII is a light-driven water:plastoquinone oxidoreductase that uses light energy to abstract electrons from H(2)O, generating O(2) and a proton gradient subsequently used for ATP formation. It consists of a core antenna complex that captures photons, and an electron transfer chain that converts photonic excitation into a charge separation. This is Photosystem II reaction center protein K from Agrostis stolonifera (Creeping bentgrass).